Here is an 876-residue protein sequence, read N- to C-terminus: Alanine--tRNA ligase (876 aa).

The Zn(2+) site is built by histidine 560, histidine 564, cysteine 662, and histidine 666.

This sequence belongs to the class-II aminoacyl-tRNA synthetase family. Zn(2+) serves as cofactor.

It is found in the cytoplasm. It catalyses the reaction tRNA(Ala) + L-alanine + ATP = L-alanyl-tRNA(Ala) + AMP + diphosphate. Its function is as follows. Catalyzes the attachment of alanine to tRNA(Ala) in a two-step reaction: alanine is first activated by ATP to form Ala-AMP and then transferred to the acceptor end of tRNA(Ala). Also edits incorrectly charged Ser-tRNA(Ala) and Gly-tRNA(Ala) via its editing domain. This is Alanine--tRNA ligase from Synechococcus sp. (strain ATCC 27144 / PCC 6301 / SAUG 1402/1) (Anacystis nidulans).